Here is a 212-residue protein sequence, read N- to C-terminus: ATP phosphoribosyltransferase (212 aa).

The protein belongs to the ATP phosphoribosyltransferase family. Short subfamily. As to quaternary structure, heteromultimer composed of HisG and HisZ subunits.

It localises to the cytoplasm. It catalyses the reaction 1-(5-phospho-beta-D-ribosyl)-ATP + diphosphate = 5-phospho-alpha-D-ribose 1-diphosphate + ATP. The protein operates within amino-acid biosynthesis; L-histidine biosynthesis; L-histidine from 5-phospho-alpha-D-ribose 1-diphosphate: step 1/9. In terms of biological role, catalyzes the condensation of ATP and 5-phosphoribose 1-diphosphate to form N'-(5'-phosphoribosyl)-ATP (PR-ATP). Has a crucial role in the pathway because the rate of histidine biosynthesis seems to be controlled primarily by regulation of HisG enzymatic activity. This Albidiferax ferrireducens (strain ATCC BAA-621 / DSM 15236 / T118) (Rhodoferax ferrireducens) protein is ATP phosphoribosyltransferase.